A 591-amino-acid polypeptide reads, in one-letter code: CTP synthase 1 (591 aa).

Residues 300 to 554 enclose the Glutamine amidotransferase type-1 domain; the sequence is SIALVGKYTK…LAAAGRLQSY (255 aa). Catalysis depends on for GATase activity residues Cys399, His526, and Glu528. 2 positions are modified to phosphoserine: Ser571 and Ser575.

Belongs to the CTP synthase family.

It catalyses the reaction UTP + L-glutamine + ATP + H2O = CTP + L-glutamate + ADP + phosphate + 2 H(+). Its pathway is pyrimidine metabolism; CTP biosynthesis via de novo pathway; CTP from UDP: step 2/2. This enzyme is involved in the de novo synthesis of CTP, a precursor of DNA, RNA and phospholipids. Catalyzes the ATP-dependent amination of UTP to CTP with either L-glutamine or ammonia as a source of nitrogen. This is CTP synthase 1 (ctps1) from Danio rerio (Zebrafish).